The sequence spans 73 residues: Arabinogalactan protein 16 (73 aa).

An N-terminal signal peptide occupies residues 1 to 26; the sequence is MASRNSVTGFALFSFVFAVILSLAGA. Gln-27 bears the Pyrrolidone carboxylic acid mark. A 4-hydroxyproline mark is found at Pro-31, Pro-33, and Pro-35. O-linked (Ara...) hydroxyproline glycans are attached at residues Pro-31, Pro-33, and Pro-35. Ser-37 is lipidated: GPI-anchor amidated serine. A propeptide spans 38–73 (removed in mature form); sequence DGTSIDQGIAYLLMVVALVLTYLIHPLDASSSYSFF.

It belongs to the AG-peptide AGP family. Contains 4-hydroxyproline; hydroxylated on Pro-31, Pro-33 and Pro-35. Post-translationally, O-glycosylated on hydroxyprolines; noncontiguous hydroxylproline residues are glycosylated with arabinogalactan. As to expression, predominantly expressed in flowers.

Its subcellular location is the cell membrane. Proteoglycan that seems to be implicated in diverse developmental roles such as differentiation, cell-cell recognition, embryogenesis and programmed cell death. The protein is Arabinogalactan protein 16 of Arabidopsis thaliana (Mouse-ear cress).